The primary structure comprises 20 residues: Insulin-like growth factor-binding protein 2 (20 aa).

The IGFBP N-terminal domain maps to 2-20; that stretch reads LVFYCPKCTAERQTACPKL.

Binds IGF2 more than IGF1. N-glycosylated.

It is found in the secreted. Inhibits IGF-mediated growth and developmental rates. IGF-binding proteins prolong the half-life of the IGFs and have been shown to either inhibit or stimulate the growth promoting effects of the IGFs on cell culture. They alter the interaction of IGFs with their cell surface receptors. The chain is Insulin-like growth factor-binding protein 2 (igfbp2) from Oncorhynchus tshawytscha (Chinook salmon).